A 171-amino-acid polypeptide reads, in one-letter code: Large ribosomal subunit protein bL9 (171 aa).

This sequence belongs to the bacterial ribosomal protein bL9 family.

In terms of biological role, binds to the 23S rRNA. This chain is Large ribosomal subunit protein bL9, found in Rickettsia felis (strain ATCC VR-1525 / URRWXCal2) (Rickettsia azadi).